The following is a 1470-amino-acid chain: Isonitrile lipopeptide synthase (1470 aa).

Residues 584–603 are disordered; sequence PEPESQEAARPTAPAPTAPA. One can recognise a Carrier domain in the interval 974-1049; sequence AHDSTLERTI…ELARFLKQQE (76 aa). O-(pantetheine 4'-phosphoryl)serine is present on serine 1009. Positions 1049–1059 are enriched in low complexity; it reads EQQAHAQVQPR. The tract at residues 1049–1070 is disordered; it reads EQQAHAQVQPRPAGPGLPPTLL.

The protein belongs to the ATP-dependent AMP-binding enzyme family. Requires pantetheine 4'-phosphate as cofactor.

The enzyme catalyses 2 a (3R)-3-isocyanyl-fatty acyl-[ACP] + L-lysine + ATP + 2 NADPH = an isonitrile lipopeptide + 2 holo-[ACP] + AMP + diphosphate + 2 NADP(+). It carries out the reaction 2 (3R)-3-isocyanylbutanoyl-[ACP] + L-lysine + ATP + 2 NADPH = (2S)-2,6-bis[(3R)-3-isocyanobutanamido]hexan-1-ol + 2 holo-[ACP] + AMP + diphosphate + 2 NADP(+). Its function is as follows. Nonribosomal peptide synthetase (NRPS) involved in the biosynthesis of a unique class of isonitrile lipopeptides (INLPs). Catalyzes the final step in the pathway, i.e. the condensation of a (3R)-3-isocyanyl-fatty acyl-[ACP] to both amino groups of a lysine, producing isonitrile lipopeptides. Can use (3R)-3-isocyanylbutanoyl-[ACP] as substrate, leading to (2S)-2,6-bis[(3R)-3-isocyanobutanamido]hexan-1-ol. This is Isonitrile lipopeptide synthase from Streptomyces coeruleorubidus.